The sequence spans 1368 residues: MAP3K epsilon protein kinase 1 (1368 aa).

The Protein kinase domain maps to 20–274; that stretch reads YMLGDEIGKG…AKTLLSHPWI (255 aa). HEAT repeat units lie at residues 25–62 and 86–125; these read EIGKGAYGRVYKGLDLENGDFVAIKQVSLENIVQEDLN and SKTKTHLHIILEYVENGSLANIIKPNKFGPFPESLVAVYI. ATP-binding positions include 26–34 and K49; that span reads IGKGAYGRV. The Proton acceptor role is filled by D144. Residues 218 to 256 form an HEAT 3 repeat; the sequence is PYYDLQPMPALFRIVQDDNPPIPDSLSPDITDFLRQCFK. Disordered stretches follow at residues 296–415 and 430–507; these read EATA…KNTS and QTSH…PVAD. Positions 351 to 364 are enriched in acidic residues; sequence LGEEGTDNSEDDIM. Composition is skewed to basic and acidic residues over residues 388 to 399 and 470 to 486; these read SDFHGKSERGET and SLHDLFHPLDKVSEGKP. Over residues 488–502 the composition is skewed to polar residues; that stretch reads EASTSMPTSNVNQGD. HEAT repeat units follow at residues 533–571, 628–653, 654–695, 699–737, and 750–788; these read SNDGGDLFRLMMGVLKDDVIDIDGLVFDEKVPAENLFPL, IPKSRVICAVLQLINEIIKDNTDFQE, NACL…SSPL, MFIACRGIPVLVGFLEADYAKYREMVHLAIDGMWQVFKL, and AAKNGILLRLINTLYSLNEATRLASISGGLDGQAPRVRS. A disordered region spans residues 777–883; that stretch reads GGLDGQAPRV…ISLSANRTST (107 aa). The segment covering 791–808 has biased composition (polar residues); that stretch reads LDPNNPIFGQNETSSLSM. 2 stretches are compositionally biased toward basic and acidic residues: residues 813-826 and 836-852; these read DVLKTRHGGGEEPS and SDVHQPDALHPDGDKPR. HEAT repeat units lie at residues 903–940, 1025–1063, 1067–1105, 1112–1150, 1154–1191, 1196–1234, 1258–1281, 1282–1318, and 1348–1368; these read EQVRPLLSLLDKEPPSRHYSGQLDYVKHITGIERHESR, ATSSGLLAHMVSTLSADVAREYLEKVADLLLEFARADTT, YMCSQSLLSRLFQMFNRVEPPILLKILECTNHLSTDPNC, ADAIKHLIPNLELKDGHLVYQIHHEVLSALFNLCKINKR, QAAENGIIPHLMLFIMSDSPLKQYALPLLCDMAHASRN, LRAHGGLDVYLSLLDDEYWSVIALDSIAVCLAQDNDNRK, RHFVHILEPFLKIITKSYRINKTL, AVNGLTPLLISRLDHQDAIARLNLLKLIKAVYEHHPR, and QVLVKQMATSLLKALHINTIL.

The protein belongs to the protein kinase superfamily. Ser/Thr protein kinase family. Interacts with SGP1. Autophosphorylated. In terms of tissue distribution, expressed in both the sporophytic and the gametophytic tissues, especially in dividing cells. Mostly present in flower buds and mature flowers. Also accumulates in embryos, in roots apices, trichomes and ovule integuments.

Its subcellular location is the cytoplasm. It is found in the cytoskeleton. The protein resides in the microtubule organizing center. The protein localises to the nucleus. It localises to the nucleolus. Its subcellular location is the cell membrane. It carries out the reaction L-seryl-[protein] + ATP = O-phospho-L-seryl-[protein] + ADP + H(+). The enzyme catalyses L-threonyl-[protein] + ATP = O-phospho-L-threonyl-[protein] + ADP + H(+). Functionally, serine/threonine-protein kinase involved in the spatial and temporal control system organizing cortical activities in mitotic and postmitotic cells. Required for the normal functioning of the plasma membrane in developing pollen. Involved in the regulation of cell expansion, cell elongation, and embryo development. The protein is MAP3K epsilon protein kinase 1 of Arabidopsis thaliana (Mouse-ear cress).